The sequence spans 405 residues: Neisseria adhesin A (405 aa).

The first 23 residues, 1 to 23 (MKHFPSKVLTTAILATFCSGALA), serve as a signal peptide directing secretion. The interval 24 to 87 (ATNDDDVKKA…ADDFKGLGLK (64 aa)) is head domain. Coiled-coil stretches lie at residues 87–170 (KKVV…KLEA) and 181–329 (AFND…LRKE). The coiled stalk domain stretch occupies residues 88 to 350 (KVVTNLTKTV…SGLFQPYNVG (263 aa)). The segment at 312-350 (HDTRLNGLDKTVSDLRKETRQGLAEQAALSGLFQPYNVG) is outer membrane translocation of the passenger domain. A run of 4 beta stranded transmembrane segments spans residues 350 to 360 (GRFNVTAAVGG), 364 to 375 (ESAVAIGTGFRF), 382 to 388 (KAGVAVG), and 394 to 405 (SAAYHVGVNYEW). The tract at residues 351–405 (RFNVTAAVGGYKSESAVAIGTGFRFTENFAAKAGVAVGTSSGSSAAYHVGVNYEW) is translocator domain.

The protein belongs to the autotransporter-2 (AT-2) (TC 1.B.40) family. In terms of assembly, the non-membrane anchored protein (residues 24-350) probably forms a homotrimer; it is assumed the mature protein forms trimers in situ. The mature protein without the membrane-targeting segment (residues 24-350) binds to human heat shock 90 beta protein (HSP90AB1) both in vitro and when incubated with human monocytes. A subsequent paper showed binding of the same fragment in epithelial cells to both HSP90AA1 and HSP90AB1; in vitro the interaction is stabilized by ADP and the Hsp90 inhibitor 17-AAG (17-N-allylamino-17-demethoxygeldanamycin), in vitro and in vivo both interactions are inhibited by ATP. Binds human oxidized low-density lipoprotein receptor 1 (LOX-1, OLR1) in protein microarrays, in solution and when LOX-1 is expressed on the cell surface. Binds via the head and the beginning of the coiled stalk (residues 24-170); binding can be abrogated by monoclonal antibodies against those specific regions of NadA. Other potential binding partners were identified but not characterized in the same study. Forms high molecular weight oligomers in whole cell extracts that are not disrupted by boiling in SDS buffer.

It is found in the cell outer membrane. The protein resides in the cell surface. Its function is as follows. Adheres to and induces bacterial uptake by human epithelial cells in a microfilament-dependent process. Binding is reduced by pronase treatment, suggesting there is a protein receptor on the human cells. Possible human protein receptors include integrin beta-1 (ITGB1) and oxidized low-density lipoprotein receptor 1 (OLR1). Binds to extracellular human Hsp90 (preferentially the beta isoform, HSP90AB1) on monocytes, binding stimulates monocytes in a TLR4-dependent fashion, polymixin B, which binds NadA, blocks the activation. Hsp90 is probably not the first receptor on human monocytes. Non-membrane anchored protein (residues 24-350) is internalized into human epithelial cells by hijacking the endosome recycling pathway and may be recycled back to the cell surface, which might aid transcellular trafficking of the bacteria. A bacterial cell surface protein; antisera against this protein induce complement-mediated killing of this and other strains. The chain is Neisseria adhesin A from Neisseria meningitidis serogroup B.